Consider the following 553-residue polypeptide: Dihydroxy-acid dehydratase (553 aa).

Aspartate 78 provides a ligand contact to Mg(2+). Residue cysteine 119 coordinates [2Fe-2S] cluster. Residues aspartate 120 and lysine 121 each coordinate Mg(2+). Lysine 121 carries the N6-carboxylysine modification. A [2Fe-2S] cluster-binding site is contributed by cysteine 193. Glutamate 441 provides a ligand contact to Mg(2+). Serine 467 serves as the catalytic Proton acceptor.

It belongs to the IlvD/Edd family. In terms of assembly, homodimer. [2Fe-2S] cluster serves as cofactor. The cofactor is Mg(2+).

The catalysed reaction is (2R)-2,3-dihydroxy-3-methylbutanoate = 3-methyl-2-oxobutanoate + H2O. It catalyses the reaction (2R,3R)-2,3-dihydroxy-3-methylpentanoate = (S)-3-methyl-2-oxopentanoate + H2O. The protein operates within amino-acid biosynthesis; L-isoleucine biosynthesis; L-isoleucine from 2-oxobutanoate: step 3/4. It functions in the pathway amino-acid biosynthesis; L-valine biosynthesis; L-valine from pyruvate: step 3/4. Its function is as follows. Functions in the biosynthesis of branched-chain amino acids. Catalyzes the dehydration of (2R,3R)-2,3-dihydroxy-3-methylpentanoate (2,3-dihydroxy-3-methylvalerate) into 2-oxo-3-methylpentanoate (2-oxo-3-methylvalerate) and of (2R)-2,3-dihydroxy-3-methylbutanoate (2,3-dihydroxyisovalerate) into 2-oxo-3-methylbutanoate (2-oxoisovalerate), the penultimate precursor to L-isoleucine and L-valine, respectively. This Pelobacter propionicus (strain DSM 2379 / NBRC 103807 / OttBd1) protein is Dihydroxy-acid dehydratase.